The chain runs to 435 residues: Probable exopolygalacturonase B (435 aa).

An N-terminal signal peptide occupies residues 1-15 (MKFFLATLFASAVSS). Residues N59, N184, and N224 are each glycosylated (N-linked (GlcNAc...) asparagine). PbH1 repeat units follow at residues 208 to 239 (SKDVSFDDVYIHAFSTNKSALPKNSDGFDSLN), 240 to 261 (VDGLTVTNTRVDVGDDCFSPKP), 262 to 283 (NTTNIFVQNLLCNNTHGVSMGS), 294 to 315 (IEHAYIENVTLLNGQNGARLKA), and 326 to 347 (INNITYKNIRIENTDAPVVLDQ). D254 (proton donor) is an active-site residue. A disulfide bridge connects residues C256 and C273. N-linked (GlcNAc...) asparagine glycans are attached at residues N262 and N274. The active site involves H277. 4 N-linked (GlcNAc...) asparagine glycosylation sites follow: N301, N328, N365, and N373. The PbH1 6 repeat unit spans residues 366 to 388 (VTNILFENISGTSSGKNGKVVAD). Residues C391 and C397 are joined by a disulfide bond. Residue N406 is glycosylated (N-linked (GlcNAc...) asparagine).

The protein belongs to the glycosyl hydrolase 28 family.

Its subcellular location is the secreted. It catalyses the reaction [(1-&gt;4)-alpha-D-galacturonosyl](n) + H2O = alpha-D-galacturonate + [(1-&gt;4)-alpha-D-galacturonosyl](n-1). In terms of biological role, specific in hydrolyzing the terminal glycosidic bond of polygalacturonic acid and oligogalacturonates. The chain is Probable exopolygalacturonase B (pgxB) from Aspergillus oryzae (strain ATCC 42149 / RIB 40) (Yellow koji mold).